The sequence spans 682 residues: Potassium-transporting ATPase ATP-binding subunit (682 aa).

Helical transmembrane passes span 35–55, 62–82, 219–239, and 254–274; these read VMFV…AMAA, TGFT…ANFA, IALT…TVTL, and VLVA…LSAI. Residue Asp-307 is the 4-aspartylphosphate intermediate of the active site. Residues Asp-344, Glu-348, 377-384, and Lys-395 contribute to the ATP site; that span reads FSAQTRMS. Positions 518 and 522 each coordinate Mg(2+). Helical transmembrane passes span 577-597, 616-636, and 656-676; these read TFSI…AFAA, AILS…PLAL, and IYGV…DMLL.

Belongs to the cation transport ATPase (P-type) (TC 3.A.3) family. Type IA subfamily. In terms of assembly, the system is composed of three essential subunits: KdpA, KdpB and KdpC.

The protein resides in the cell inner membrane. The catalysed reaction is K(+)(out) + ATP + H2O = K(+)(in) + ADP + phosphate + H(+). Part of the high-affinity ATP-driven potassium transport (or Kdp) system, which catalyzes the hydrolysis of ATP coupled with the electrogenic transport of potassium into the cytoplasm. This subunit is responsible for energy coupling to the transport system and for the release of the potassium ions to the cytoplasm. The sequence is that of Potassium-transporting ATPase ATP-binding subunit from Erwinia tasmaniensis (strain DSM 17950 / CFBP 7177 / CIP 109463 / NCPPB 4357 / Et1/99).